A 312-amino-acid polypeptide reads, in one-letter code: Ribosomal RNA small subunit methyltransferase H (312 aa).

S-adenosyl-L-methionine contacts are provided by residues 34–36 (AGH), D54, F81, D102, and Q109.

The protein belongs to the methyltransferase superfamily. RsmH family.

Its subcellular location is the cytoplasm. It carries out the reaction cytidine(1402) in 16S rRNA + S-adenosyl-L-methionine = N(4)-methylcytidine(1402) in 16S rRNA + S-adenosyl-L-homocysteine + H(+). In terms of biological role, specifically methylates the N4 position of cytidine in position 1402 (C1402) of 16S rRNA. In Geotalea daltonii (strain DSM 22248 / JCM 15807 / FRC-32) (Geobacter daltonii), this protein is Ribosomal RNA small subunit methyltransferase H.